Here is a 270-residue protein sequence, read N- to C-terminus: Interleukin-1 alpha (270 aa).

A propeptide spanning residues 1 to 112 (MAKVPDLFED…DTEEEIIKPR (112 aa)) is cleaved from the precursor. N6-acetyllysine is present on Lys82. The nuclear localization signal (NLS) stretch occupies residues 82–86 (KKRRL). Ser87 carries the phosphoserine modification. Asn102 and Asn141 each carry an N-linked (GlcNAc...) asparagine glycan.

This sequence belongs to the IL-1 family. As to quaternary structure, monomer. Interacts with TMED10; the interaction mediates the translocation from the cytoplasm into the ERGIC (endoplasmic reticulum-Golgi intermediate compartment) and thereby secretion. Interacts with IL1R1. Interacts with S100A13; this interaction is the first step in the export of IL1A, followed by direct translocation of this complex across the plasma membrane. Post-translationally, acetylated within its nuclear localization sequence, which impacts subcellular localization. In terms of processing, proteolytic processed by CAPN1 in a calcium-dependent manner. Cleavage from 31 kDa precursor to 18 kDa biologically active molecules. Phosphorylated. Phosphorylation greatly enhances susceptibility to digestion and promotes the conversion of pre-IL1A alpha to the biologically active IL1A.

Its subcellular location is the nucleus. It is found in the cytoplasm. The protein resides in the secreted. Its function is as follows. Cytokine constitutively present intracellularly in nearly all resting non-hematopoietic cells that plays an important role in inflammation and bridges the innate and adaptive immune systems. After binding to its receptor IL1R1 together with its accessory protein IL1RAP, forms the high affinity interleukin-1 receptor complex. Signaling involves the recruitment of adapter molecules such as MYD88, IRAK1 or IRAK4. In turn, mediates the activation of NF-kappa-B and the three MAPK pathways p38, p42/p44 and JNK pathways. Within the cell, acts as an alarmin and cell death results in its liberation in the extracellular space after disruption of the cell membrane to induce inflammation and alert the host to injury or damage. In addition to its role as a danger signal, which occurs when the cytokine is passively released by cell necrosis, directly senses DNA damage and acts as signal for genotoxic stress without loss of cell integrity. This chain is Interleukin-1 alpha (IL1A), found in Sus scrofa (Pig).